The chain runs to 200 residues: Recombination protein RecR (200 aa).

A C4-type zinc finger spans residues 57-72; sequence CSECRTFTEEDTCAIC. Positions 81–176 constitute a Toprim domain; that stretch reads GEMCIVESPA…PASRIAHGVP (96 aa).

The protein belongs to the RecR family.

In terms of biological role, may play a role in DNA repair. It seems to be involved in an RecBC-independent recombinational process of DNA repair. It may act with RecF and RecO. The polypeptide is Recombination protein RecR (Aliivibrio fischeri (strain ATCC 700601 / ES114) (Vibrio fischeri)).